Here is a 231-residue protein sequence, read N- to C-terminus: Large ribosomal subunit protein uL1 (231 aa).

It belongs to the universal ribosomal protein uL1 family. As to quaternary structure, part of the 50S ribosomal subunit.

In terms of biological role, binds directly to 23S rRNA. The L1 stalk is quite mobile in the ribosome, and is involved in E site tRNA release. Functionally, protein L1 is also a translational repressor protein, it controls the translation of the L11 operon by binding to its mRNA. This chain is Large ribosomal subunit protein uL1, found in Lactobacillus delbrueckii subsp. bulgaricus (strain ATCC 11842 / DSM 20081 / BCRC 10696 / JCM 1002 / NBRC 13953 / NCIMB 11778 / NCTC 12712 / WDCM 00102 / Lb 14).